Here is a 272-residue protein sequence, read N- to C-terminus: Ribosomal RNA small subunit methyltransferase A (272 aa).

S-adenosyl-L-methionine contacts are provided by histidine 11, leucine 13, glycine 38, glutamate 59, aspartate 84, and asparagine 109.

It belongs to the class I-like SAM-binding methyltransferase superfamily. rRNA adenine N(6)-methyltransferase family. RsmA subfamily.

The protein localises to the cytoplasm. It carries out the reaction adenosine(1518)/adenosine(1519) in 16S rRNA + 4 S-adenosyl-L-methionine = N(6)-dimethyladenosine(1518)/N(6)-dimethyladenosine(1519) in 16S rRNA + 4 S-adenosyl-L-homocysteine + 4 H(+). In terms of biological role, specifically dimethylates two adjacent adenosines (A1518 and A1519) in the loop of a conserved hairpin near the 3'-end of 16S rRNA in the 30S particle. May play a critical role in biogenesis of 30S subunits. The protein is Ribosomal RNA small subunit methyltransferase A of Rippkaea orientalis (strain PCC 8801 / RF-1) (Cyanothece sp. (strain PCC 8801)).